Here is a 46-residue protein sequence, read N- to C-terminus: Myoregulin (46 aa).

Residues M1–I21 are Cytoplasmic-facing. A helical transmembrane segment spans residues L22–V42. The Lumenal segment spans residues V43–S46.

In terms of assembly, homooligomer. Monomer. Interacts with ATP2A1/SERCA1. Interacts as a monomer with ATP2A2/SERCA2; the interaction inhibits ATP2A2 activity. Specifically expressed in all skeletal muscles. Detected in both fast- and slow-type skeletal muscle. Not expressed in cardiac or smooth muscles.

Its subcellular location is the sarcoplasmic reticulum membrane. Functionally, inhibits the activity of ATP2A1/SERCA1 ATPase in sarcoplasmic reticulum by decreasing the apparent affinity of the ATPase for Ca(2+), thereby acting as a key regulator of skeletal muscle activity. Its high expression in adult skeletal muscle, suggests that it constitutes the predominant regulator of ATP2A1/SERCA1 in adult skeletal muscle. Also inhibits the activity of ATP2A2/SERCA2 and ATP2A3/SERCA3. In Mus musculus (Mouse), this protein is Myoregulin.